The chain runs to 290 residues: Succinate dehydrogenase [ubiquinone] iron-sulfur subunit, mitochondrial (290 aa).

Residues 1–38 (MAAAVVGVSLRRGVPARFLRAGLRPVRGLEAVHGICRG) constitute a mitochondrion transit peptide. The region spanning 50-143 (KKFSIYRWDP…TTKIYPLPHM (94 aa)) is the 2Fe-2S ferredoxin-type domain. The [2Fe-2S] cluster site is built by C103, C108, C111, and C123. Residues 186 to 216 (DRQKLDGLYECILCACCSTSCPSYWWNGDKY) enclose the 4Fe-4S ferredoxin-type domain. Positions 196, 199, and 202 each coordinate [4Fe-4S] cluster. Position 206 (C206) interacts with [3Fe-4S] cluster. W211 contacts a ubiquinone. The [3Fe-4S] cluster site is built by C253 and C259. Position 263 (C263) interacts with [4Fe-4S] cluster.

It belongs to the succinate dehydrogenase/fumarate reductase iron-sulfur protein family. In terms of assembly, component of complex II composed of four subunits: the flavoprotein (FP) SDHA, iron-sulfur protein (IP) SDHB, and a cytochrome b560 composed of SDHC and SDHD. It depends on [2Fe-2S] cluster as a cofactor. [3Fe-4S] cluster serves as cofactor. Requires [4Fe-4S] cluster as cofactor.

The protein localises to the mitochondrion inner membrane. The catalysed reaction is a quinone + succinate = fumarate + a quinol. The enzyme catalyses (R)-malate + a quinone = enol-oxaloacetate + a quinol. It catalyses the reaction (S)-malate + a quinone = enol-oxaloacetate + a quinol. The protein operates within carbohydrate metabolism; tricarboxylic acid cycle; fumarate from succinate (eukaryal route): step 1/1. Enol-oxaloacetate inhibits the succinate dehydrogenase activity. In terms of biological role, iron-sulfur protein (IP) subunit of the succinate dehydrogenase complex (mitochondrial respiratory chain complex II), responsible for transferring electrons from succinate to ubiquinone (coenzyme Q). SDH also oxidizes malate to the non-canonical enol form of oxaloacetate, enol-oxaloacetate. Enol-oxaloacetate, which is a potent inhibitor of the succinate dehydrogenase activity, is further isomerized into keto-oxaloacetate. This Gallus gallus (Chicken) protein is Succinate dehydrogenase [ubiquinone] iron-sulfur subunit, mitochondrial (SDHB).